A 267-amino-acid polypeptide reads, in one-letter code: Tryptophan synthase alpha chain (267 aa).

Catalysis depends on proton acceptor residues glutamate 49 and aspartate 60.

It belongs to the TrpA family. In terms of assembly, tetramer of two alpha and two beta chains.

The catalysed reaction is (1S,2R)-1-C-(indol-3-yl)glycerol 3-phosphate + L-serine = D-glyceraldehyde 3-phosphate + L-tryptophan + H2O. Its pathway is amino-acid biosynthesis; L-tryptophan biosynthesis; L-tryptophan from chorismate: step 5/5. Functionally, the alpha subunit is responsible for the aldol cleavage of indoleglycerol phosphate to indole and glyceraldehyde 3-phosphate. The polypeptide is Tryptophan synthase alpha chain (Salinispora arenicola (strain CNS-205)).